We begin with the raw amino-acid sequence, 114 residues long: U-myrmeciitoxin(01)-Mg8a (114 aa).

A signal peptide spans 1–20 (MKLSTLLVAFVLLVITVILS). Residues 21 to 44 (TPSTNAKALAESNALAVAVSEAEP) constitute a propeptide that is removed on maturation.

Belongs to the formicidae venom precursor-01 superfamily. In terms of tissue distribution, expressed by the venom gland.

The protein localises to the secreted. Functionally, may have antimicrobial properties, like most ant linear peptides. The polypeptide is U-myrmeciitoxin(01)-Mg8a (Myrmecia gulosa (Red bulldog ant)).